The primary structure comprises 820 residues: Phosphoenolpyruvate synthase (820 aa).

The active-site Tele-phosphohistidine intermediate is the H438. Substrate is bound by residues R539, R587, E689, G710, S711, N712, and D713. E689 contacts Mg(2+). D713 is a binding site for Mg(2+). C762 acts as the Proton donor in catalysis.

Belongs to the PEP-utilizing enzyme family. It depends on Mg(2+) as a cofactor.

It catalyses the reaction pyruvate + ATP + H2O = phosphoenolpyruvate + AMP + phosphate + 2 H(+). The protein operates within carbohydrate biosynthesis; gluconeogenesis. Functionally, catalyzes the phosphorylation of pyruvate to phosphoenolpyruvate. In Aeropyrum pernix (strain ATCC 700893 / DSM 11879 / JCM 9820 / NBRC 100138 / K1), this protein is Phosphoenolpyruvate synthase (ppsA).